A 232-amino-acid chain; its full sequence is Proteasome subunit alpha type-2 (232 aa).

This sequence belongs to the peptidase T1A family. The 26S proteasome consists of a 20S proteasome core and two 19S regulatory subunits. The 20S proteasome core is composed of 28 subunits that are arranged in four stacked rings, resulting in a barrel-shaped structure. The two end rings are each formed by seven alpha subunits, and the two central rings are each formed by seven beta subunits. The catalytic chamber with the active sites is on the inside of the barrel.

It localises to the cytoplasm. The protein localises to the nucleus. The proteasome is a multicatalytic proteinase complex which is characterized by its ability to cleave peptides with Arg, Phe, Tyr, Leu, and Glu adjacent to the leaving group at neutral or slightly basic pH. The proteasome has an ATP-dependent proteolytic activity. The sequence is that of Proteasome subunit alpha type-2 (psmA2) from Dictyostelium discoideum (Social amoeba).